Here is a 507-residue protein sequence, read N- to C-terminus: ATP synthase subunit alpha, chloroplastic (507 aa).

170 to 177 (GDRQTGKT) is an ATP binding site.

Belongs to the ATPase alpha/beta chains family. In terms of assembly, F-type ATPases have 2 components, CF(1) - the catalytic core - and CF(0) - the membrane proton channel. CF(1) has five subunits: alpha(3), beta(3), gamma(1), delta(1), epsilon(1). CF(0) has four main subunits: a, b, b' and c.

The protein resides in the plastid. The protein localises to the chloroplast thylakoid membrane. The catalysed reaction is ATP + H2O + 4 H(+)(in) = ADP + phosphate + 5 H(+)(out). In terms of biological role, produces ATP from ADP in the presence of a proton gradient across the membrane. The alpha chain is a regulatory subunit. The protein is ATP synthase subunit alpha, chloroplastic of Eucalyptus globulus subsp. globulus (Tasmanian blue gum).